Here is an 873-residue protein sequence, read N- to C-terminus: Tyrosine-protein kinase receptor TYRO3 (873 aa).

An N-terminal signal peptide occupies residues 1–28; the sequence is MELRRSMALPRLLLLGLWAAALRDGAVA. Ig-like C2-type domains follow at residues 29 to 116 and 127 to 208; these read AGMK…KEES and PYFT…ATVQ. The Extracellular portion of the chain corresponds to 29-416; that stretch reads AGMKFTGSPI…QRQPPYGTSW (388 aa). Asparagine 51 is a glycosylation site (N-linked (GlcNAc...) asparagine). Intrachain disulfides connect cysteine 52–cysteine 105 and cysteine 148–cysteine 191. N-linked (GlcNAc...) asparagine glycans are attached at residues asparagine 179, asparagine 184, asparagine 218, asparagine 228, asparagine 281, asparagine 353, and asparagine 367. Fibronectin type-III domains are found at residues 215–308 and 310–403; these read PPLN…TLEL and PSST…AQEV. A helical transmembrane segment spans residues 417-437; it reads VPVALGILTALVTAVALALIL. Over 438-873 the chain is Cytoplasmic; that stretch reads LRKRRKETRF…ELETEGEKSC (436 aa). The 272-residue stretch at 505–776 folds into the Protein kinase domain; it reads FTLGRMLGKG…GVLRSQLEMI (272 aa). ATP-binding positions include 511-519 and lysine 537; that span reads LGKGEFGSV. The Proton acceptor role is filled by aspartate 642. Phosphotyrosine; by autocatalysis is present on tyrosine 673. A disordered region spans residues 845-873; that stretch reads VEGERHPEGQEGENKSLLYELETEGEKSC. Positions 847 to 858 are enriched in basic and acidic residues; sequence GERHPEGQEGEN.

It belongs to the protein kinase superfamily. Tyr protein kinase family. AXL/UFO subfamily. Post-translationally, autophosphorylated on tyrosine residues. As to expression, detected in embryonic retina (at protein level). detected in brain, retina, kidney and in retinal Mueller glia-like cells.

It is found in the cell membrane. The catalysed reaction is L-tyrosyl-[protein] + ATP = O-phospho-L-tyrosyl-[protein] + ADP + H(+). Its function is as follows. Receptor tyrosine kinase that transduces signals from the extracellular matrix into the cytoplasm by binding to several ligands. Regulates many physiological processes including cell survival, migration and differentiation. Ligand binding at the cell surface induces dimerization and autophosphorylation of TYRO3 on its intracellular domain that provides docking sites for downstream signaling molecules. Following activation by ligand, enhances PI3-kinase activity and activates the AKT survival pathway, including nuclear translocation of NF-kappa-B and up-regulation of transcription of NF-kappa-B-regulated genes. This is Tyrosine-protein kinase receptor TYRO3 (TYRO3) from Gallus gallus (Chicken).